Here is a 935-residue protein sequence, read N- to C-terminus: Formin-I (935 aa).

Residues 35–76 (QQQQQQQQQQINNENENSINNQENKENNNKDNNNNNNKEIKQ) are a coiled coil. Disordered stretches follow at residues 52–78 (SINN…KQSS), 380–511 (LSSA…QLTP), and 561–590 (KEKM…QSLS). The segment covering 384–407 (KKQPQQQPQKDVTSSSSSSSNSSS) has biased composition (low complexity). Residues 418 to 428 (ITTNDSSSSNP) are compositionally biased toward polar residues. Over residues 431–443 (DFDKLSLSSDDKV) the composition is skewed to basic and acidic residues. The span at 444–454 (NNNNVQIENTT) shows a compositional bias: polar residues. The 62-residue stretch at 444 to 505 (NNNNVQIENT…KPNNSGGGGG (62 aa)) folds into the FH1 domain. Over residues 456–482 (SVPPPPPVGAPPPPPPPPPPPPPPPPS) the composition is skewed to pro residues. The segment covering 484-499 (LKLNRNRISTPKKPNN) has biased composition (polar residues). In terms of domain architecture, FH2 spans 506–935 (GGQLTPLQKK…SLNLSTLNSK (430 aa)). Residues 568 to 583 (NLNNSNNNNNNNSNNN) are compositionally biased toward low complexity. 2 coiled-coil regions span residues 702–730 (SLLD…FIKV) and 803–834 (QSSL…QQLL).

The protein belongs to the formin homology family. Diaphanous subfamily.

In terms of biological role, formins play an important role in the nucleation of actin and the formation of linear actin filaments. The chain is Formin-I (forI) from Dictyostelium discoideum (Social amoeba).